We begin with the raw amino-acid sequence, 239 residues long: Ribosomal RNA large subunit methyltransferase E (239 aa).

Residues Met1–Lys20 form a disordered region. The span at Thr11 to Lys20 shows a compositional bias: basic residues. 5 residues coordinate S-adenosyl-L-methionine: Gly81, Trp83, Asp104, Asp120, and Asp144. The active-site Proton acceptor is Lys184.

This sequence belongs to the class I-like SAM-binding methyltransferase superfamily. RNA methyltransferase RlmE family.

The protein localises to the cytoplasm. It catalyses the reaction uridine(2552) in 23S rRNA + S-adenosyl-L-methionine = 2'-O-methyluridine(2552) in 23S rRNA + S-adenosyl-L-homocysteine + H(+). Functionally, specifically methylates the uridine in position 2552 of 23S rRNA at the 2'-O position of the ribose in the fully assembled 50S ribosomal subunit. This is Ribosomal RNA large subunit methyltransferase E from Rhizobium leguminosarum bv. trifolii (strain WSM2304).